Consider the following 141-residue polypeptide: Calcium-binding protein SPEC 2D (141 aa).

EF-hand domains follow at residues 10–42 (DQIK…MKSV), 43–72 (GHVL…AMIL), 73–107 (DKKC…FDRQ), and 108–141 (ITED…MNFC). Ca(2+) is bound by residues Asp-23, Asn-25, Asp-27, and Asn-29. The Ca(2+) site is built by Asp-84, Asp-86, Lys-90, Asp-95, Asp-121, Asp-125, Lys-127, and Glu-132.

In terms of tissue distribution, found in cell lineages giving rise to the aboral ectoderm, a squamous epithelium covering the surface of the late stage embryo and larva.

Functionally, calcium-binding protein involved in larval development and metamorphosis. Likely to function as calcium buffers mediating the transport of calcium from the sea water to the blastocoel where calcium is required for skeleton formation. In Strongylocentrotus purpuratus (Purple sea urchin), this protein is Calcium-binding protein SPEC 2D (SPEC2D).